A 419-amino-acid chain; its full sequence is uncharacterized protein (419 aa).

An Obg domain is found at 29 to 236 (PKFQDKIRIR…KLIELELKTI (208 aa)). An OBG-type G domain is found at 237-414 (CEIGLVGLPN…LVRGMTQLLQ (178 aa)). GTP is bound by residues 243 to 250 (GLPNAGKS), 295 to 299 (DIPGI), and 364 to 367 (ANKA).

It belongs to the TRAFAC class OBG-HflX-like GTPase superfamily. OBG GTPase family.

The protein localises to the mitochondrion. This is an uncharacterized protein from Schizosaccharomyces pombe (strain 972 / ATCC 24843) (Fission yeast).